We begin with the raw amino-acid sequence, 278 residues long: NAD kinase (278 aa).

The active-site Proton acceptor is the Asp-67. NAD(+) is bound by residues 67–68, Arg-72, 137–138, Lys-148, Arg-165, Asp-167, 178–183, Ala-202, and Gln-237; these read DG, NE, and TGYAMS.

The protein belongs to the NAD kinase family. It depends on a divalent metal cation as a cofactor.

The protein resides in the cytoplasm. It carries out the reaction NAD(+) + ATP = ADP + NADP(+) + H(+). Involved in the regulation of the intracellular balance of NAD and NADP, and is a key enzyme in the biosynthesis of NADP. Catalyzes specifically the phosphorylation on 2'-hydroxyl of the adenosine moiety of NAD to yield NADP. The protein is NAD kinase of Thermococcus kodakarensis (strain ATCC BAA-918 / JCM 12380 / KOD1) (Pyrococcus kodakaraensis (strain KOD1)).